Reading from the N-terminus, the 561-residue chain is Tectonic-like complex member MKS1 (561 aa).

Positions 314–442 (LRLFVNGEVV…TVSTWRPMEL (129 aa)) constitute a C2 B9-type domain.

As to quaternary structure, part of the tectonic-like complex (also named B9 complex). Interacts with TMEM107. Interacts with TCTN3, AHI1, TCTN1, TCTN2, CC2D2A. Interacts with FLNA. Interacts with TMEM67. Interacts with B9D1 and B9D2. As to expression, widely expressed in embryo at 15.5 dpc, with a relatively strong expression in brain, liver, kidney and digits of the upper limbs. Highly expressed in bronchiolar epithelium.

The protein localises to the cytoplasm. It localises to the cytoskeleton. The protein resides in the cilium basal body. Its subcellular location is the microtubule organizing center. It is found in the centrosome. Component of the tectonic-like complex, a complex localized at the transition zone of primary cilia and acting as a barrier that prevents diffusion of transmembrane proteins between the cilia and plasma membranes. Involved in centrosome migration to the apical cell surface during early ciliogenesis. Required for ciliary structure and function, including a role in regulating length and appropriate number through modulating centrosome duplication. Required for cell branching morphology. The polypeptide is Tectonic-like complex member MKS1 (Mks1) (Mus musculus (Mouse)).